The sequence spans 226 residues: X-linked lymphocyte-regulated protein 3C (226 aa).

Residues M1–V66 form a disordered region. Basic and acidic residues predominate over residues A8–M18. A compositionally biased stretch (polar residues) spans N21–P30. Composition is skewed to basic and acidic residues over residues E39 to I48 and Q56 to V66. The stretch at E155–Q210 forms a coiled coil.

This sequence belongs to the XLR/SYCP3 family. Expressed in lymphoid cells.

The chain is X-linked lymphocyte-regulated protein 3C (Xlr3c) from Mus musculus (Mouse).